Reading from the N-terminus, the 1405-residue chain is Protein crumbs homolog 1 (1405 aa).

The N-terminal stretch at 1–27 (MKLKRTAYLLFLYLSSSLLICIKNSFC) is a signal peptide. Residues 28-1339 (NKNNTRCLSG…RCELDLADDR (1312 aa)) lie on the Extracellular side of the membrane. Positions 30-67 (NNTRCLSGPCQNNSTCKHFPQDNNCCLDTANNLDKDCE) constitute an EGF-like 1; atypical domain. 33 disulfides stabilise this stretch: Cys-34/Cys-45, Cys-39/Cys-54, Cys-55/Cys-66, Cys-73/Cys-84, Cys-78/Cys-95, Cys-97/Cys-106, Cys-113/Cys-124, Cys-118/Cys-133, Cys-135/Cys-144, Cys-151/Cys-162, Cys-156/Cys-171, Cys-173/Cys-182, Cys-189/Cys-200, Cys-194/Cys-209, Cys-211/Cys-220, Cys-227/Cys-238, Cys-232/Cys-247, Cys-249/Cys-258, Cys-265/Cys-276, Cys-270/Cys-285, Cys-287/Cys-297, Cys-304/Cys-315, Cys-309/Cys-324, Cys-326/Cys-335, Cys-342/Cys-353, Cys-347/Cys-382, Cys-384/Cys-393, Cys-400/Cys-411, Cys-405/Cys-420, Cys-422/Cys-437, Cys-444/Cys-455, Cys-449/Cys-468, and Cys-470/Cys-479. Residue Asn-41 is glycosylated (N-linked (GlcNAc...) asparagine). 2 EGF-like domains span residues 69 to 107 (LKDPCFSSPCQGIATCVKIPGEGNFLCQCPPGYSGLNCE) and 109 to 145 (ATNSCGGNLCQHGGTCRKDPEHPVCICPPGYAGRFCE). The 37-residue stretch at 147-183 (DHNECASSPCHNGAMCQDGINGYSCFCVPGYQGRHCD) folds into the EGF-like 4; calcium-binding domain. Residues 185–221 (EVDECVSDPCKNEAVCLNEIGRYTCVCPQEFSGVNCE) enclose the EGF-like 5; calcium-binding domain. The region spanning 223–259 (EIDECRSQPCLHGATCQDAPGGYSCDCAPGFLGEHCE) is the EGF-like 6; calcium-binding domain. EGF-like domains lie at 261-298 (SVNECESQPCLHGGLCVDGRNSYHCDCTGSGFTGMHCE), 300-336 (LIPLCWSKPCHNDATCEDTVDSYICHCRPGYTGALCE), 338-394 (DINE…IHCE), 396-438 (DVDE…ENCS), and 440-480 (ILLG…PLCE). A Laminin G-like 1 domain is found at 482 to 669 (VTTLSFGSNG…GLSSNVKAGC (188 aa)). Residues Asn-560 and Asn-656 are each glycosylated (N-linked (GlcNAc...) asparagine). 4 disulfides stabilise this stretch: Cys-641–Cys-669, Cys-675–Cys-686, Cys-680–Cys-695, and Cys-697–Cys-706. An EGF-like 12 domain is found at 671 to 707 (GKDWCESQPCQNRGRCINLWQGYQCECDRPYTGSNCL). In terms of domain architecture, Laminin G-like 2 spans 713-884 (GRFGQDDSTG…PILVNVTQGC (172 aa)). Asn-756 and Asn-879 each carry an N-linked (GlcNAc...) asparagine glycan. 6 disulfide bridges follow: Cys-850-Cys-884, Cys-890-Cys-901, Cys-895-Cys-910, Cys-912-Cys-921, Cys-927-Cys-938, and Cys-932-Cys-947. 2 EGF-like domains span residues 886–922 (GDNTCKSNPCHNGGVCHSLWDDFSCSCPTNTAGRACE) and 923–959 (QVQWCQLSPCPPTAECQLLPQGFECIANAVFSGLSRE). A Laminin G-like 3 domain is found at 950-1136 (NAVFSGLSRE…VSTNMVLTGC (187 aa)). N-linked (GlcNAc...) asparagine glycans are attached at residues Asn-967, Asn-974, and Asn-999. 16 disulfide bridges follow: Cys-1095/Cys-1136, Cys-1142/Cys-1153, Cys-1147/Cys-1162, Cys-1164/Cys-1173, Cys-1180/Cys-1190, Cys-1185/Cys-1199, Cys-1201/Cys-1210, Cys-1217/Cys-1228, Cys-1222/Cys-1237, Cys-1239/Cys-1248, Cys-1258/Cys-1273, Cys-1267/Cys-1282, Cys-1284/Cys-1293, Cys-1300/Cys-1311, Cys-1305/Cys-1320, and Cys-1322/Cys-1331. In terms of domain architecture, EGF-like 15 spans 1138-1174 (PSNACHSSPCLHGGNCEDSYSSYRCACLSGWSGTHCE). One can recognise an EGF-like 16; calcium-binding domain in the interval 1176–1211 (NIDECFSSPCIHGNCSDGVAAYHCRCEPGYTGVNCE). Asn-1189 carries N-linked (GlcNAc...) asparagine glycosylation. EGF-like domains follow at residues 1213 to 1249 (DVDNCKSHQCANGATCVPEAHGYSCLCFGNFTGRFCR) and 1254 to 1294 (PSTV…EWCE). 2 N-linked (GlcNAc...) asparagine glycosylation sites follow: Asn-1242 and Asn-1264. An EGF-like 19; calcium-binding domain is found at 1296 to 1332 (DINECASDPCINGGLCRDLVNRFLCICDVAFAGERCE). The chain crosses the membrane as a helical span at residues 1340–1360 (LLGIFTAVGSGTLALFFILLL). Residues 1361-1405 (AGVASLIASNKRATQGTYSPSGQEKAGPRVEMWIRMPPPALERLI) lie on the Cytoplasmic side of the membrane.

It belongs to the Crumbs protein family. As to quaternary structure, component of a complex composed of PALS1, CRB1 and EPB41L5. Within the complex, interacts (via intracellular domain) with PALS1 and EPB41L5 (via FERM domain). Forms a complex with MPP4 and PALS1. Interacts with MPDZ/MUPP1 and MPP4. Glycosylated. As to expression, expressed in the kidney, lung, stomach and testis. Expressed in the brain. Expressed in the retina of the eye. Expressed in the outer nuclear layer, photoreceptor layer and inner nuclear layer of the retina. Expressed in Mueller cell radial processes in the inner nuclear layer, in apical processes sclerad to the external limiting membrane, and in the subapical region, adjacent to the adherens junction of retinal photoreceptors. In the brain, expressed in the granular layer of the cerebellum, the hippocampal dentate gyrus, the olfactory bulbs, the subventricular region lining the telencephalic ventricles and the rostral migratory stream. Ubiquitously expressed.

Its subcellular location is the apical cell membrane. The protein resides in the secreted. It is found in the cell projection. The protein localises to the cilium. It localises to the photoreceptor outer segment. Its subcellular location is the photoreceptor inner segment. The protein resides in the cytoplasm. It is found in the cell junction. The protein localises to the focal adhesion. In terms of biological role, plays a role in photoreceptor morphogenesis in the retina. May maintain cell polarization and adhesion. Functionally, may play a role in epidermal tissue morphogenesis. May function in cell attachment for stratified epithelial organization. In Mus musculus (Mouse), this protein is Protein crumbs homolog 1 (Crb1).